The sequence spans 497 residues: Protein DETOXIFICATION 25 (497 aa).

The next 12 membrane-spanning stretches (helical) occupy residues 43 to 63, 70 to 90, 121 to 141, 157 to 177, 186 to 206, 216 to 236, 261 to 281, 291 to 311, 339 to 359, 381 to 401, 416 to 436, and 438 to 458; these read LPST…QAFI, GLAA…GIMA, IVDT…GPIL, IYPW…MQMY, IIGI…WWCV, ALLG…VYVF, LSIS…IIVL, IAIS…NICF, VVLV…LAFG, IVLS…GVAI, SYYA…NFGI, and GLWS…CYVI.

This sequence belongs to the multi antimicrobial extrusion (MATE) (TC 2.A.66.1) family.

Its subcellular location is the membrane. This chain is Protein DETOXIFICATION 25, found in Arabidopsis thaliana (Mouse-ear cress).